Here is a 223-residue protein sequence, read N- to C-terminus: Ribonuclease T (223 aa).

The region spanning 20 to 195 (VVIDVETAGF…YDTERTAELF (176 aa)) is the Exonuclease domain. Asp-23, Glu-25, His-182, and Asp-187 together coordinate Mg(2+). The active-site Proton donor/acceptor is the His-182.

It belongs to the RNase T family. As to quaternary structure, homodimer. The cofactor is Mg(2+).

Its function is as follows. Trims short 3' overhangs of a variety of RNA species, leaving a one or two nucleotide 3' overhang. Responsible for the end-turnover of tRNA: specifically removes the terminal AMP residue from uncharged tRNA (tRNA-C-C-A). Also appears to be involved in tRNA biosynthesis. The polypeptide is Ribonuclease T (Photobacterium profundum (strain SS9)).